Reading from the N-terminus, the 148-residue chain is Probable calcium-binding protein CML14 (148 aa).

EF-hand domains are found at residues 9–44 (DQVSSMKEAFMLFDTDGDGKIAPSELGILMRSLGGN), 80–115 (PFDRQLRDAFKVLDKEGTGFVAVADLRHILTSIGEK), and 116–148 (LQPSEFDEWIKEVDVGSDGKIRYEDFIARMVAK). Residues Asp22, Asp24, Asp26, Lys28, and Glu33 each contribute to the Ca(2+) site.

In terms of biological role, potential calcium sensor. The chain is Probable calcium-binding protein CML14 (CML14) from Arabidopsis thaliana (Mouse-ear cress).